Reading from the N-terminus, the 399-residue chain is Acetate kinase (399 aa).

Asparagine 9 contributes to the Mg(2+) binding site. Lysine 16 serves as a coordination point for ATP. Arginine 90 contacts substrate. Catalysis depends on aspartate 147, which acts as the Proton donor/acceptor. ATP contacts are provided by residues 207–211 (HIGNG), 282–284 (DLR), and 330–334 (GVGEN). Residue glutamate 384 participates in Mg(2+) binding.

This sequence belongs to the acetokinase family. Homodimer. It depends on Mg(2+) as a cofactor. The cofactor is Mn(2+).

It localises to the cytoplasm. The catalysed reaction is acetate + ATP = acetyl phosphate + ADP. The protein operates within metabolic intermediate biosynthesis; acetyl-CoA biosynthesis; acetyl-CoA from acetate: step 1/2. Its function is as follows. Catalyzes the formation of acetyl phosphate from acetate and ATP. Can also catalyze the reverse reaction. The sequence is that of Acetate kinase from Staphylococcus saprophyticus subsp. saprophyticus (strain ATCC 15305 / DSM 20229 / NCIMB 8711 / NCTC 7292 / S-41).